We begin with the raw amino-acid sequence, 545 residues long: Ubiquitin carboxyl-terminal hydrolase 17-like protein D (545 aa).

A USP domain is found at 51–348 (CGLQNTGNSC…NAYVLFYVQQ (298 aa)). Residue Cys60 is the Nucleophile of the active site. The Proton acceptor role is filled by His307. 2 disordered regions span residues 367-443 (LDPE…KLGQ) and 521-545 (RQEGRRRSKKGKNKNKQGQKLLLVR). Residues 374–385 (KKSRRKKHKKKS) show a composition bias toward basic residues. Basic and acidic residues predominate over residues 393 to 404 (EPSKNREKKATK). Positions 524–537 (GRRRSKKGKNKNKQ) are enriched in basic residues.

It belongs to the peptidase C19 family. USP17 subfamily. Detected in T-cell, myeloid, and embryonic stem cell lines.

It is found in the nucleus. The protein localises to the endoplasmic reticulum. The catalysed reaction is Thiol-dependent hydrolysis of ester, thioester, amide, peptide and isopeptide bonds formed by the C-terminal Gly of ubiquitin (a 76-residue protein attached to proteins as an intracellular targeting signal).. Functionally, deubiquitinating enzyme that removes conjugated ubiquitin from specific proteins to regulate different cellular processes that may include cell proliferation, progression through the cell cycle, apoptosis, cell migration, and the cellular response to viral infection. The polypeptide is Ubiquitin carboxyl-terminal hydrolase 17-like protein D (Mus musculus (Mouse)).